We begin with the raw amino-acid sequence, 1381 residues long: Hepatocyte growth factor receptor (1381 aa).

The N-terminal stretch at 1 to 24 (MKAPAVLAPGILMLLFTLVQRSNG) is a signal peptide. At 25 to 932 (ECKEALAKSE…VIVQPDQNFT (908 aa)) the chain is on the extracellular side. The Sema domain maps to 27–515 (KEALAKSEMN…TGKKITKIPL (489 aa)). Residue Asn-45 is glycosylated (N-linked (GlcNAc...) asparagine). 4 disulfides stabilise this stretch: Cys-95–Cys-101, Cys-98–Cys-160, Cys-133–Cys-141, and Cys-172–Cys-175. N-linked (GlcNAc...) asparagine glycosylation occurs at Asn-106. Asn-149 carries an N-linked (GlcNAc...) asparagine glycan. Asn-202 carries an N-linked (GlcNAc...) asparagine glycan. 2 disulfide bridges follow: Cys-298-Cys-363 and Cys-385-Cys-397. 2 N-linked (GlcNAc...) asparagine glycosylation sites follow: Asn-399 and Asn-405. 4 cysteine pairs are disulfide-bonded: Cys-520–Cys-538, Cys-526–Cys-561, Cys-529–Cys-545, and Cys-541–Cys-551. IPT/TIG domains lie at 563 to 655 (PAIY…FSYV), 657 to 739 (PIIT…FSYR), and 742 to 836 (PIVY…LIYV). The O-linked (Man) threonine glycan is linked to Thr-582. N-linked (GlcNAc...) asparagine glycosylation is found at Asn-607 and Asn-635. O-linked (Man) threonine glycosylation is found at Thr-676 and Thr-761. N-linked (GlcNAc...) asparagine glycosylation is found at Asn-785, Asn-879, and Asn-930. The chain crosses the membrane as a helical span at residues 933 to 955 (GLIAGVVSISIALLLLLGLFLWL). Residues 956 to 1381 (KKRKQIKDLG…EDNADDEVDT (426 aa)) lie on the Cytoplasmic side of the membrane. Ser-966 is modified (phosphoserine). Thr-977 carries the phosphothreonine modification. Phosphoserine occurs at positions 990, 997, and 1000. At Tyr-1003 the chain carries Phosphotyrosine. Positions 1078–1345 (VHFNEVIGRG…RISAIFSTFI (268 aa)) constitute a Protein kinase domain. ATP-binding positions include 1084 to 1092 (IGRGHFGCV) and Lys-1110. Asp-1204 functions as the Proton acceptor in the catalytic mechanism. An interaction with RANBP9 region spans residues 1212-1381 (LDEKFTVKVA…EDNADDEVDT (170 aa)). At Tyr-1230 the chain carries Phosphotyrosine. A phosphotyrosine; by autocatalysis mark is found at Tyr-1234 and Tyr-1235. A Phosphothreonine modification is found at Thr-1289. The tract at residues 1320–1359 (WHPKAEMRPSFSELVSRISAIFSTFIGEHYVHVNATYVNV) is interaction with MUC20. Phosphotyrosine; by autocatalysis occurs at positions 1349 and 1356. Tyr-1365 is subject to Phosphotyrosine.

It belongs to the protein kinase superfamily. Tyr protein kinase family. As to quaternary structure, heterodimer made of an alpha chain (50 kDa) and a beta chain (145 kDa) which are disulfide linked. Binds PLXNB1. Interacts when phosphorylated with downstream effectors including STAT3, PIK3R1, SRC, PCLG1, GRB2 and GAB1. Interacts with SPSB1, SPSB2 and SPSB4. Interacts with INPP5D/SHIP1. When phosphorylated at Tyr-1356, interacts with INPPL1/SHIP2. Interacts with RANBP9 and RANBP10, as well as SPSB1, SPSB2, SPSB3 and SPSB4. SPSB1 binding occurs in the presence and in the absence of HGF, however HGF treatment has a positive effect on this interaction. Interacts with MUC20; prevents interaction with GRB2 and suppresses hepatocyte growth factor-induced cell proliferation. Interacts with GRB10. Interacts with PTPN1 and PTPN2. Interacts with HSP90AA1 and HSP90AB1; the interaction suppresses MET kinase activity. Interacts with tensin TNS3. Interacts (when phosphorylated) with tensin TNS4 (via SH2 domain); the interaction increases MET protein stability by inhibiting MET endocytosis and subsequent lysosomal degradation. In terms of assembly, (Microbial infection) Immunoprecipitates with L.monocytogenes InlB. InlB probably dimerizes upon binding to MET, which encourages subsequent dimerization of MET. Post-translationally, autophosphorylated in response to ligand binding on Tyr-1234 and Tyr-1235 in the kinase domain leading to further phosphorylation of Tyr-1349 and Tyr-1356 in the C-terminal multifunctional docking site. Dephosphorylated by PTPRJ at Tyr-1349 and Tyr-1365. Dephosphorylated by PTPN1 and PTPN2. In terms of processing, ubiquitinated. Ubiquitination by CBL regulates the receptor stability and activity through proteasomal degradation. O-mannosylation of IPT/TIG domains by TMEM260 is required for protein maturation. O-mannosylated residues are composed of single mannose glycans that are not elongated or modified. Post-translationally, (Microbial infection) Tyrosine phosphorylation is stimulated by L.monocytogenes InlB.

The protein resides in the membrane. It carries out the reaction L-tyrosyl-[protein] + ATP = O-phospho-L-tyrosyl-[protein] + ADP + H(+). With respect to regulation, in its inactive state, the C-terminal tail interacts with the catalytic domain and inhibits the kinase activity. Upon ligand binding, the C-terminal tail is displaced and becomes phosphorylated, thus increasing the kinase activity. Receptor tyrosine kinase that transduces signals from the extracellular matrix into the cytoplasm by binding to hepatocyte growth factor/HGF ligand. Regulates many physiological processes including proliferation, scattering, morphogenesis and survival. Ligand binding at the cell surface induces autophosphorylation of MET on its intracellular domain that provides docking sites for downstream signaling molecules. Following activation by ligand, interacts with the PI3-kinase subunit PIK3R1, PLCG1, SRC, GRB2, STAT3 or the adapter GAB1. Recruitment of these downstream effectors by MET leads to the activation of several signaling cascades including the RAS-ERK, PI3 kinase-AKT, or PLCgamma-PKC. The RAS-ERK activation is associated with the morphogenetic effects while PI3K/AKT coordinates prosurvival effects. During embryonic development, MET signaling plays a role in gastrulation, development and migration of muscles and neuronal precursors, angiogenesis and kidney formation. In adults, participates in wound healing as well as organ regeneration and tissue remodeling. Also promotes differentiation and proliferation of hematopoietic cells. Its function is as follows. (Microbial infection) Acts as a receptor for Listeria monocytogenes internalin InlB, mediating entry of the pathogen into cells. The protein is Hepatocyte growth factor receptor (MET) of Chlorocebus aethiops (Green monkey).